A 95-amino-acid chain; its full sequence is Non-specific lipid-transfer protein (95 aa).

Cystine bridges form between Cys4-Cys52, Cys14-Cys29, and Cys50-Cys90.

Belongs to the plant LTP family. Seeds.

In terms of biological role, plant non-specific lipid-transfer proteins transfer phospholipids as well as galactolipids across membranes. May play a role in wax or cutin deposition in the cell walls of expanding epidermal cells and certain secretory tissues. The sequence is that of Non-specific lipid-transfer protein from Eleusine coracana (Indian finger millet).